The sequence spans 317 residues: Secreted frizzled-related protein 5 (317 aa).

The N-terminal stretch at 1 to 29 (MRAAAAGGGVRTAALALLLGALHWAPARC) is a signal peptide. The 118-residue stretch at 48 to 165 (SKPPQCLDIP…PLDNDLCIAV (118 aa)) folds into the FZ domain. 8 disulfides stabilise this stretch: Cys53/Cys116, Cys63/Cys109, Cys100/Cys135, Cys124/Cys162, Cys128/Cys152, Cys181/Cys253, Cys184/Cys255, and Cys198/Cys303. One can recognise an NTR domain in the interval 181–303 (CAQCEMEHSA…AVKFMFSYPC (123 aa)).

Belongs to the secreted frizzled-related protein (sFRP) family. In terms of tissue distribution, highly expressed in the retinal pigment epithelium (RPE) and pancreas. Weak expression in heart, liver and muscle.

It localises to the secreted. Soluble frizzled-related proteins (sFRPS) function as modulators of Wnt signaling through direct interaction with Wnts. They have a role in regulating cell growth and differentiation in specific cell types. SFRP5 may be involved in determining the polarity of photoreceptor, and perhaps, other cells in the retina. This Homo sapiens (Human) protein is Secreted frizzled-related protein 5 (SFRP5).